The following is a 348-amino-acid chain: Fe(3+) ions import ATP-binding protein FbpC (348 aa).

The region spanning 7-237 (VELRNVTKRF…PASRFMASFM (231 aa)) is the ABC transporter domain. 39-46 (GPSGCGKT) contacts ATP.

It belongs to the ABC transporter superfamily. Fe(3+) ion importer (TC 3.A.1.10) family. The complex is composed of two ATP-binding proteins (FbpC), two transmembrane proteins (FbpB) and a solute-binding protein (FbpA).

It localises to the cell inner membrane. It catalyses the reaction Fe(3+)(out) + ATP + H2O = Fe(3+)(in) + ADP + phosphate + H(+). In terms of biological role, part of the ABC transporter complex FbpABC involved in Fe(3+) ions import. Responsible for energy coupling to the transport system. In Escherichia coli (strain K12), this protein is Fe(3+) ions import ATP-binding protein FbpC.